Consider the following 594-residue polypeptide: Probable Xaa-Pro aminopeptidase P (594 aa).

Mn(2+) is bound by residues D391, D402, E500, and E514.

The protein belongs to the peptidase M24B family. Mn(2+) is required as a cofactor.

The catalysed reaction is Release of any N-terminal amino acid, including proline, that is linked to proline, even from a dipeptide or tripeptide.. Functionally, catalyzes the removal of a penultimate prolyl residue from the N-termini of peptides. The protein is Probable Xaa-Pro aminopeptidase P (ampp) of Pyrenophora tritici-repentis (strain Pt-1C-BFP) (Wheat tan spot fungus).